The primary structure comprises 333 residues: MRVKMFKPLRLVLLIAVSVLLMAARMPNMRVVPWQQVEVPTQNILLDIAFTGTTPSHGWLVGDKATLLESRDGGLHWQVRELPGLEPEAYLASISFAGAEGWVAGQPKILLHTLNEGSDWTSIRLNNQLPGEPLLIQALGPGAAEMVTNVGAIYRTEDGGQTWHAQVDEPIGAIKNIARGPEGEYLAVSSRGSFYFLYTPESRTWKPYPRESSRRIQNMGFGPHGSAWKLNQGAEIAFTDDFTSGQWSSPLRPGRALSFGYLNAAYQNDHDLWVVGGGATLIHSPDGGKTWEQAKKLSNIPANFYSIEFFGPEQGFILGQRGTLLRYVSSNNS.

A signal peptide spans 1–25; that stretch reads MRVKMFKPLRLVLLIAVSVLLMAAR.

It belongs to the Ycf48 family. As to quaternary structure, part of early PSII assembly complexes which includes D1 (psbA) and PsbI; not found in mature PSII. Binds to the lumenal side of PSII complexes. Interacts with YidC.

It is found in the cellular thylakoid lumen. Functionally, a factor required for optimal assembly of photosystem II (PSII), acting in the early stages of PSII assembly. Also plays a role in replacement of photodamaged D1 (psbA). Assists YidC in synthesis of chlorophyll-binding proteins. The polypeptide is Photosystem II assembly protein Ycf48 (Synechococcus sp. (strain JA-2-3B'a(2-13)) (Cyanobacteria bacterium Yellowstone B-Prime)).